The primary structure comprises 427 residues: MTPQQLTEEYIFAHDLREASAKIYRAATKALLKHFGPTATVQDVDHRAVLGWRRKVLEQGLSKRSWNTYSNHLRTIWGYAIEHELVTHSQVNPFRKTTVIPPRRASKTVAAEAILRARSWLSMQVGAERCTGDRARITPAWFWLCTFEVFYYTGIRLNALLCIRKRDIDWDNQLILIRGETEKTHKEFVVPITEGLVPHLSRLLQEAEKAGFADDDQLFNVNRFSPHYKSKTMNSDQVEAMYRKLTEKVGVRMTPHRFRHTLATDLMKAPERNIHLTKCLLNHSNIQTTMSYIEADYDHMRAVLHARSLAQGALENVRKVDYSGSPQASAKPKPCGQPLARVGEVPPPEARTEPSEPREHTQETGIQRGPTSWEAEAVPQPPDTFEQSVLFTLMAQHLSNRAATASAVPAATSGSGGRGSAARDSLA.

The region spanning 1–81 (MTPQQLTEEY…HLRTIWGYAI (81 aa)) is the Core-binding (CB) domain. The Tyr recombinase domain occupies 116-305 (RARSWLSMQV…DYDHMRAVLH (190 aa)). Catalysis depends on residues R156, K183, H256, R259, and H283. The active-site O-(3'-phospho-DNA)-tyrosine intermediate is the Y292. Disordered regions lie at residues 323–384 (SGSP…PPDT) and 401–427 (RAAT…DSLA). Over residues 350–362 (ARTEPSEPREHTQ) the composition is skewed to basic and acidic residues. Residues 402 to 413 (AATASAVPAATS) are compositionally biased toward low complexity.

Belongs to the 'phage' integrase family.

Its subcellular location is the cytoplasm. Its function is as follows. Site-specific tyrosine recombinase, which acts by catalyzing the cutting and rejoining of the recombining DNA molecules. This Pseudomonas aeruginosa protein is Putative tyrosine recombinase XerC.